A 282-amino-acid polypeptide reads, in one-letter code: 4-diphosphocytidyl-2-C-methyl-D-erythritol kinase (282 aa).

Lys11 is a catalytic residue. Residue 95–105 participates in ATP binding; it reads PMGGGVGGGSS. The active site involves Asp137.

Belongs to the GHMP kinase family. IspE subfamily.

It carries out the reaction 4-CDP-2-C-methyl-D-erythritol + ATP = 4-CDP-2-C-methyl-D-erythritol 2-phosphate + ADP + H(+). Its pathway is isoprenoid biosynthesis; isopentenyl diphosphate biosynthesis via DXP pathway; isopentenyl diphosphate from 1-deoxy-D-xylulose 5-phosphate: step 3/6. Functionally, catalyzes the phosphorylation of the position 2 hydroxy group of 4-diphosphocytidyl-2C-methyl-D-erythritol. This Haemophilus ducreyi (strain 35000HP / ATCC 700724) protein is 4-diphosphocytidyl-2-C-methyl-D-erythritol kinase.